The following is a 693-amino-acid chain: Elongation factor G (693 aa).

In terms of domain architecture, tr-type G spans 8–282; it reads EKTRNIGIMA…AVIDYLPSPL (275 aa). Residues 17–24, 81–85, and 135–138 contribute to the GTP site; these read AHVDAGKT, DTPGH, and NKMD.

This sequence belongs to the TRAFAC class translation factor GTPase superfamily. Classic translation factor GTPase family. EF-G/EF-2 subfamily.

It localises to the cytoplasm. Catalyzes the GTP-dependent ribosomal translocation step during translation elongation. During this step, the ribosome changes from the pre-translocational (PRE) to the post-translocational (POST) state as the newly formed A-site-bound peptidyl-tRNA and P-site-bound deacylated tRNA move to the P and E sites, respectively. Catalyzes the coordinated movement of the two tRNA molecules, the mRNA and conformational changes in the ribosome. The polypeptide is Elongation factor G (Streptococcus gordonii (strain Challis / ATCC 35105 / BCRC 15272 / CH1 / DL1 / V288)).